Here is a 95-residue protein sequence, read N- to C-terminus: MFWIFVMAKPASLSIELDSDLDRRLSEIAEGMDQPKTAIIERALRDFVELRDWQDAAIDEGLRAAEEGRVFDHDKVGEWIDSWGTPNERPMPSRD.

Functionally, antitoxin component of a non-functional type II toxin-antitoxin (TA system). Does not neutralize the effect of any of the RelE or ParE toxins. This chain is Orphan antitoxin ParD2 (parD2), found in Caulobacter vibrioides (strain ATCC 19089 / CIP 103742 / CB 15) (Caulobacter crescentus).